The following is a 122-amino-acid chain: MGVSRACFVVMVVVYMVVAATPNVKLAEALTCGQVTGALAPCLGYLRTAGSVPVPLTCCNGVRGLNNAARTTIDRRTACNCLKQTANAIADLNLNAAAGLPAKCGVNIPYKISPSTDCNRVV.

Residues 1-19 form the signal peptide; sequence MGVSRACFVVMVVVYMVVA. Residues 20-29 constitute a propeptide that is removed on maturation; the sequence is ATPNVKLAEA. 4 cysteine pairs are disulfide-bonded: Cys-32/Cys-81, Cys-42/Cys-58, Cys-59/Cys-104, and Cys-79/Cys-118.

In terms of assembly, monomer.

Its function is as follows. Plant non-specific lipid-transfer proteins transfer phospholipids as well as galactolipids across membranes. May play a role in wax or cutin deposition in the cell walls of expanding epidermal cells and certain secretory tissues. Binds saturated fatty acids, unsaturated fatty acids, lysolipids and, with highest efficiency, jasmonic acid. Has weak antimicrobial activity against fungi. Inhibits spore germination and hyphae elongation in A.niger VKM F-2259 and N.crassa VKM F-184. Has no antibacterial activity against A.tumefaciens A281, C.michiganensis VKM Ac-144 and P.syringae VKM B-1546. The chain is Non-specific lipid-transfer protein from Anethum graveolens (Dill).